A 652-amino-acid chain; its full sequence is MANCEGTDGDGSGCNGWFLVQAIVDKQTGDTVSEDEDENATDTGSDLADFIDDTTDICVQAERETAQVLYNMQEAQRDAQSVRALKRKYGGSNLNKSPCAKPPGVHREQRVTLQELPVNICNKQARTNVYSVPDSGYGNMEVETAEVEVTVVNNTNGEEEGENGGENGGSIREECSSVDSAIDSENQDPQSPTAQLKTVLQANNQKAILLSQFKHTYGLAFNDLVRTFKSDKTICTDWVAAICGVNPTIAEGFKTLIQPYALYTHIQCLDTKYGVYILLLIRYKCGKNRITVGKGLSKLLHVPESCMLIEPPKLRSPVAALYWYRTGMSNISEVSGTTPEWIQRLTVIQHGIDDSVFDLSDMVQWAFDNDVTEDSDIAYGYALLADSNSNAAAFLKSNCQAKYVRDCATMCRHYKRAQKKQMTMAQWIRFRCDKCDDGGDWRPIVQFLRYQGVEFITFLCAFKEFLKGTPKKNCIVIQGPPNTGKSYFCMSLMHFLQGTVISYVNSTSHFWLEPLADAKVAMLDDATGTCWSYFDTYMRNALDGNPISLDRKHRHLIQIKCPPILITSNTNPVEENRWPYLTSRLTVFTFPNAFPFDQNRNPVYTINNKNWKSFFQKTWCKLDLQQDEDEGDNDGNTIPTFKCVTGENTRTL.

The Nuclear localization signal signature appears at 86-88 (KRK). Ser-92 carries the phosphoserine; by host modification. A disordered region spans residues 153–173 (NNTNGEEEGENGGENGGSIRE). Residues 188–354 (DPQSPTAQLK…LTVIQHGIDD (167 aa)) are DNA-binding region. Residues 453–603 (VEFITFLCAF…FPFDQNRNPV (151 aa)) form the SF3 helicase domain. 479 to 486 (GPPNTGKS) lines the ATP pocket. Residue Lys-560 forms a Glycyl lysine isopeptide (Lys-Gly) (interchain with G-Cter in SUMO) linkage.

It belongs to the papillomaviridae E1 protein family. As to quaternary structure, can form hexamers. Interacts with E2 protein; this interaction increases E1 DNA binding specificity. Interacts with host DNA polymerase subunit POLA2. Interacts with host single stranded DNA-binding protein RPA1. Interacts with host TOP1; this interaction stimulates the enzymatic activity of TOP1. In terms of processing, phosphorylated. Post-translationally, sumoylated.

It is found in the host nucleus. It carries out the reaction Couples ATP hydrolysis with the unwinding of duplex DNA by translocating in the 3'-5' direction.. The enzyme catalyses ATP + H2O = ADP + phosphate + H(+). In terms of biological role, ATP-dependent DNA 3'-5' helicase required for initiation of viral DNA replication. It forms a complex with the viral E2 protein. The E1-E2 complex binds to the replication origin which contains binding sites for both proteins. During the initial step, a dimer of E1 interacts with a dimer of protein E2 leading to a complex that binds the viral origin of replication with high specificity. Then, a second dimer of E1 displaces the E2 dimer in an ATP-dependent manner to form the E1 tetramer. Following this, two E1 monomers are added to each half of the site, which results in the formation of two E1 trimers on the viral ori. Subsequently, two hexamers will be created. The double hexamer acts as a bi-directional helicase machinery and unwinds the viral DNA and then recruits the host DNA polymerase to start replication. The sequence is that of Replication protein E1 from Human papillomavirus type 70.